Here is a 1747-residue protein sequence, read N- to C-terminus: E3 ubiquitin-protein ligase listerin (1747 aa).

Positions 1-24 (MGGKTKQAPRTKNNAKPSSSSRTA) are disordered. Polar residues predominate over residues 8-24 (APRTKNNAKPSSSSRTA). HEAT repeat units follow at residues 65 to 102 (AAIS…QSDV), 106 to 144 (KNIL…KCKK), 346 to 383 (NIRK…KVTQ), 424 to 461 (NAYF…NVLE), and 508 to 547 (KFWI…ANPS). Ser-566 is modified (phosphoserine). 12 HEAT repeats span residues 612–653 (SRYI…LLGQ), 664–711 (EIVF…CAEA), 789–825 (SFIA…EHRP), 952–989 (LSRN…DPED), 1005–1042 (KWNE…ELVL), 1053–1090 (GNSS…FCPQ), 1129–1166 (KLSQ…NFEG), 1216–1258 (VEFI…SIAQ), 1269–1307 (VAVY…LFAK), 1330–1363 (FQAC…NSNI), 1364–1400 (TLDH…HFVA), and 1500–1539 (ENFL…QKDR). The segment at 1697-1744 (CYVCYTVIHQETCQLPKLTCKTCKKKFHGPCLYKWFTTSSKSTCPICR) adopts an RING-type zinc-finger fold.

The protein belongs to the LTN1 family. Component of the ribosome quality control complex (RQC), composed of at least the E3 ubiquitin ligase l(3)76BDr/LTN1 and Clbn/NEMF. The complex probably also contains TCF25 as well as TER94/VCP and its ubiquitin-binding cofactors. RQC forms a stable complex with 60S ribosomal subunits.

The protein resides in the cytoplasm. It is found in the cytosol. It catalyses the reaction S-ubiquitinyl-[E2 ubiquitin-conjugating enzyme]-L-cysteine + [acceptor protein]-L-lysine = [E2 ubiquitin-conjugating enzyme]-L-cysteine + N(6)-ubiquitinyl-[acceptor protein]-L-lysine.. It participates in protein modification; protein ubiquitination. Its function is as follows. E3 ubiquitin-protein ligase component of the ribosome quality control complex (RQC), a ribosome-associated complex that mediates ubiquitination and extraction of incompletely synthesized nascent chains for proteasomal degradation. Ubiquitination leads to TER94/VCP recruitment for extraction and degradation of the incomplete translation product. This is E3 ubiquitin-protein ligase listerin from Drosophila melanogaster (Fruit fly).